We begin with the raw amino-acid sequence, 465 residues long: Lysophospholipid acyltransferase 2 (465 aa).

Helical transmembrane passes span 15–35, 55–75, 86–106, 161–181, 214–234, 266–286, 356–376, 399–419, and 434–454; these read VSVA…ISFL, FLSY…PMTI, LSGF…HVFY, SLIE…GPVF, AVFQ…QFPL, YFIW…FSGW, AVWH…ALMI, VLVL…SVGF, and VYYI…LVPV. The active site involves His-359.

The protein belongs to the membrane-bound acyltransferase family. As to quaternary structure, interacts with GPAT9 and DGAT1. Expressed in rosette leaves, pollen grains, developing embryos and developing seeds.

The protein localises to the endoplasmic reticulum membrane. The enzyme catalyses a 1-acyl-sn-glycero-3-phosphocholine + an acyl-CoA = a 1,2-diacyl-sn-glycero-3-phosphocholine + CoA. It catalyses the reaction 1-(9Z-octadecenoyl)-sn-glycero-3-phosphocholine + (9Z)-octadecenoyl-CoA = 1,2-di-(9Z-octadecenoyl)-sn-glycero-3-phosphocholine + CoA. The catalysed reaction is 1-(9Z-octadecenoyl)-sn-glycero-3-phosphocholine + (9Z,12Z)-octadecadienoyl-CoA = 1-(9Z)-octadecenoyl-2-(9Z,12Z)-octadecadienoyl-sn-glycero-3-phosphocholine + CoA. It carries out the reaction (9Z,12Z,15Z)-octadecatrienoyl-CoA + 1-(9Z-octadecenoyl)-sn-glycero-3-phosphocholine = 1-(9Z-octadecaenoyl)-2-(9Z,12Z,15Z-octadecatrienoyl)-sn-glycero-3-phosphocholine + CoA. The enzyme catalyses a 1-acyl-sn-glycero-3-phosphoethanolamine + an acyl-CoA = a 1,2-diacyl-sn-glycero-3-phosphoethanolamine + CoA. It catalyses the reaction a 1-acyl-sn-glycero-3-phospho-L-serine + an acyl-CoA = a 1,2-diacyl-sn-glycero-3-phospho-L-serine + CoA. Its function is as follows. Lysophospholipid acyltransferase with broad specificity. Mediates the conversion of lysophosphatidylethanolamine (1-acyl-sn-glycero-3-phosphoethanolamine or LPE) into phosphatidylethanolamine (1,2-diacyl-sn-glycero-3-phosphoethanolamine or PE) (LPEAT activity). Catalyzes the acylation of lysophosphatidylserine (1-acyl-2-hydroxy-sn-glycero-3-phospho-L-serine or LPS) into phosphatidylserine (1,2-diacyl-sn-glycero-3-phospho-L-serine or PS) (LPSAT activity). Can convert lysophosphatidylcholine (1-acyl-sn-glycero-3-phosphocholine or LPC) into phosphatidylcholine (1,2-diacyl-sn-glycero-3-phosphocholine or PC) (LPCAT activity). Exhibits preference for C18-unsaturated acyl-CoA when transferring an acyl group to lysophosphatidylcholine. Can also utilize lysophosphatidylglycerol (LPG) as substrate in vitro. Has neither activity towards lysophosphatidic acid (LPA) nor lysophosphatidylinositol (LPI). Lysophospholipid acyltransferases catalyze the reacylation step of the phospholipid remodeling pathway also known as the Lands cycle. The primary function of the Lands cycle is to provide a route for acyl remodeling to modify fatty acid (FA) composition of phospholipids derived from the Kennedy pathway. Is involved in PC acyl editing and phosphocholine headgroup exchange between PC and diacylglycerols. This processes control the majority of acyl fluxes through PC to provide polyunsaturated fatty acids for triacylglycerols synthesis in seeds. Involved with LPCAT1 in the direct incorporation of newly synthesized fatty acids exported form the chloroplast into PC through acyl editing. This Arabidopsis thaliana (Mouse-ear cress) protein is Lysophospholipid acyltransferase 2.